The sequence spans 101 residues: Small ribosomal subunit protein bS18c (101 aa).

The protein belongs to the bacterial ribosomal protein bS18 family. As to quaternary structure, part of the 30S ribosomal subunit.

The protein resides in the plastid. Its subcellular location is the chloroplast. This chain is Small ribosomal subunit protein bS18c, found in Populus alba (White poplar).